The chain runs to 423 residues: tRNA(Ile2) 2-agmatinylcytidine synthetase TiaS (423 aa).

The OB DNA-binding region spans 273–347 (VIVYGRVVEE…GINIEKIKIL (75 aa)).

Belongs to the TiaS family.

The protein localises to the cytoplasm. It carries out the reaction cytidine(34) in tRNA(Ile2) + agmatine + ATP + H2O = 2-agmatinylcytidine(34) in tRNA(Ile2) + AMP + 2 phosphate + 2 H(+). Its function is as follows. ATP-dependent agmatine transferase that catalyzes the formation of 2-agmatinylcytidine (agm2C) at the wobble position (C34) of tRNA(Ile2), converting the codon specificity from AUG to AUA. The chain is tRNA(Ile2) 2-agmatinylcytidine synthetase TiaS from Methanocaldococcus jannaschii (strain ATCC 43067 / DSM 2661 / JAL-1 / JCM 10045 / NBRC 100440) (Methanococcus jannaschii).